The primary structure comprises 359 residues: Peptide chain release factor 1 (359 aa).

Gln236 bears the N5-methylglutamine mark.

It belongs to the prokaryotic/mitochondrial release factor family. Methylated by PrmC. Methylation increases the termination efficiency of RF1.

The protein localises to the cytoplasm. Its function is as follows. Peptide chain release factor 1 directs the termination of translation in response to the peptide chain termination codons UAG and UAA. This chain is Peptide chain release factor 1, found in Streptococcus pneumoniae serotype 19F (strain G54).